The following is a 349-amino-acid chain: Glycosyltransferase 8 domain-containing protein 2 (349 aa).

The Cytoplasmic portion of the chain corresponds to 1 to 6 (MALLRK). Residues 7 to 24 (INQVLLFLLIVTLCVILY) traverse the membrane as a helical; Signal-anchor for type II membrane protein segment. The Lumenal segment spans residues 25–349 (KKVHKGTVPK…AGIFKLNHHS (325 aa)). The N-linked (GlcNAc...) asparagine glycan is linked to Asn234.

This sequence belongs to the glycosyltransferase 8 family.

The protein resides in the membrane. The polypeptide is Glycosyltransferase 8 domain-containing protein 2 (GLT8D2) (Homo sapiens (Human)).